We begin with the raw amino-acid sequence, 205 residues long: GTP cyclohydrolase-2 (205 aa).

49 to 53 (RLHSE) lines the GTP pocket. Zn(2+) contacts are provided by C54, C65, and C67. GTP-binding positions include Q70, 92–94 (EGR), and T114. D126 acts as the Proton acceptor in catalysis. The active-site Nucleophile is the R128. T149 and K154 together coordinate GTP.

The protein belongs to the GTP cyclohydrolase II family. Zn(2+) serves as cofactor.

The catalysed reaction is GTP + 4 H2O = 2,5-diamino-6-hydroxy-4-(5-phosphoribosylamino)-pyrimidine + formate + 2 phosphate + 3 H(+). It functions in the pathway cofactor biosynthesis; riboflavin biosynthesis; 5-amino-6-(D-ribitylamino)uracil from GTP: step 1/4. In terms of biological role, catalyzes the conversion of GTP to 2,5-diamino-6-ribosylamino-4(3H)-pyrimidinone 5'-phosphate (DARP), formate and pyrophosphate. This is GTP cyclohydrolase-2 from Pseudomonas paraeruginosa (strain DSM 24068 / PA7) (Pseudomonas aeruginosa (strain PA7)).